Here is a 258-residue protein sequence, read N- to C-terminus: Global transcriptional regulator CodY (258 aa).

Positions 1–156 (MSSLLDKTRM…SATIIGLEIL (156 aa)) are GAF domain. Residues 204–223 (ASKIADKVGITRSVIVNALR) constitute a DNA-binding region (H-T-H motif).

The protein belongs to the CodY family.

It is found in the cytoplasm. In terms of biological role, DNA-binding global transcriptional regulator which is involved in the adaptive response to starvation and acts by directly or indirectly controlling the expression of numerous genes in response to nutrient availability. During rapid exponential growth, CodY is highly active and represses genes whose products allow adaptation to nutrient depletion. The sequence is that of Global transcriptional regulator CodY from Clostridium botulinum (strain Okra / Type B1).